We begin with the raw amino-acid sequence, 287 residues long: ATP synthase gamma chain (287 aa).

The protein belongs to the ATPase gamma chain family. As to quaternary structure, F-type ATPases have 2 components, CF(1) - the catalytic core - and CF(0) - the membrane proton channel. CF(1) has five subunits: alpha(3), beta(3), gamma(1), delta(1), epsilon(1). CF(0) has three main subunits: a, b and c.

The protein localises to the cell membrane. Functionally, produces ATP from ADP in the presence of a proton gradient across the membrane. The gamma chain is believed to be important in regulating ATPase activity and the flow of protons through the CF(0) complex. The chain is ATP synthase gamma chain from Wolbachia sp. subsp. Drosophila simulans (strain wRi).